Reading from the N-terminus, the 241-residue chain is ATP synthase subunit a (241 aa).

6 helical membrane-spanning segments follow: residues 19–39, 80–100, 106–126, 135–155, 177–197, and 203–223; these read AVLIAHLLLVAVIVIMIAKMA, LVAAVGLFIFVSNVIGIIPGF, NINVTLPLALMVFVYYNYEGI, FAHFAGPVKLLAPLMFPIEIV, LFLWVLLMLVPFVAPLPAYLL, and LLQTFVFMILIYVYLAGAVAI.

This sequence belongs to the ATPase A chain family. F-type ATPases have 2 components, CF(1) - the catalytic core - and CF(0) - the membrane proton channel. CF(1) has five subunits: alpha(3), beta(3), gamma(1), delta(1), epsilon(1). CF(0) has three main subunits: a(1), b(2) and c(9-12). The alpha and beta chains form an alternating ring which encloses part of the gamma chain. CF(1) is attached to CF(0) by a central stalk formed by the gamma and epsilon chains, while a peripheral stalk is formed by the delta and b chains.

Its subcellular location is the cell inner membrane. In terms of biological role, key component of the proton channel; it plays a direct role in the translocation of protons across the membrane. In Sulfurovum sp. (strain NBC37-1), this protein is ATP synthase subunit a.